The primary structure comprises 369 residues: MPERDPILLTPGPLTTSRMTRDAMLRDWGSWDAAFNRLTKSVCADLVRIAGGGDAYVCVPLQGSGTFAVEATLGTLVPRDARVLVPNNGAYCARIAAILRRLGIAHVELPFAEDEPASAHAIDAALARDARLTHVALVHLETSAGLLNPLDDIAAVCRARGKALIVDAMSSFGALPIALAASGIDALISASGKCLEGVPGMGFAIVRRSALEAAEGRSPSVALDLHDQYAYMQRTSQWRFTPPTHVLAALRAALDQFFDEGGQPARGARYARNCATLVDGMRALGFEPFLDARAQASVIVTFYAPADPAYAFPAFYAAVRDAGYVLYPGKLTTADTFRVGCIGALGADEMRGAVAAIGGALESLGIAMR.

Lys-193 carries the post-translational modification N6-(pyridoxal phosphate)lysine.

Belongs to the class-V pyridoxal-phosphate-dependent aminotransferase family. PhnW subfamily. As to quaternary structure, homodimer. The cofactor is pyridoxal 5'-phosphate.

The catalysed reaction is (2-aminoethyl)phosphonate + pyruvate = phosphonoacetaldehyde + L-alanine. In terms of biological role, involved in phosphonate degradation. This Burkholderia pseudomallei (strain 1106a) protein is 2-aminoethylphosphonate--pyruvate transaminase.